Reading from the N-terminus, the 105-residue chain is MKRLRVGDLVQVISGKEEGKQGRITKILADEDRVVVEGLNTVTRHQRPTPRNQEGGKITKEAPIHASKVMPVDPATGKPTRVKVRVGEDGKKTRVGKSGSAIGVG.

It belongs to the universal ribosomal protein uL24 family. In terms of assembly, part of the 50S ribosomal subunit.

Its function is as follows. One of two assembly initiator proteins, it binds directly to the 5'-end of the 23S rRNA, where it nucleates assembly of the 50S subunit. In terms of biological role, one of the proteins that surrounds the polypeptide exit tunnel on the outside of the subunit. This is Large ribosomal subunit protein uL24 from Sorangium cellulosum (strain So ce56) (Polyangium cellulosum (strain So ce56)).